Reading from the N-terminus, the 89-residue chain is Small ribosomal subunit protein uS15 (89 aa).

Residues 1 to 21 (MVMTAEDKAQVIGEHKKHDGD) are compositionally biased toward basic and acidic residues. Residues 1 to 24 (MVMTAEDKAQVIGEHKKHDGDTGS) are disordered.

The protein belongs to the universal ribosomal protein uS15 family. In terms of assembly, part of the 30S ribosomal subunit. Forms a bridge to the 50S subunit in the 70S ribosome, contacting the 23S rRNA.

Its function is as follows. One of the primary rRNA binding proteins, it binds directly to 16S rRNA where it helps nucleate assembly of the platform of the 30S subunit by binding and bridging several RNA helices of the 16S rRNA. In terms of biological role, forms an intersubunit bridge (bridge B4) with the 23S rRNA of the 50S subunit in the ribosome. In Solidesulfovibrio magneticus (strain ATCC 700980 / DSM 13731 / RS-1) (Desulfovibrio magneticus), this protein is Small ribosomal subunit protein uS15.